The sequence spans 263 residues: Ribosomal RNA small subunit methyltransferase A (263 aa).

S-adenosyl-L-methionine contacts are provided by histidine 13, leucine 15, glycine 40, glutamate 61, aspartate 86, and asparagine 105.

This sequence belongs to the class I-like SAM-binding methyltransferase superfamily. rRNA adenine N(6)-methyltransferase family. RsmA subfamily.

The protein localises to the cytoplasm. The enzyme catalyses adenosine(1518)/adenosine(1519) in 16S rRNA + 4 S-adenosyl-L-methionine = N(6)-dimethyladenosine(1518)/N(6)-dimethyladenosine(1519) in 16S rRNA + 4 S-adenosyl-L-homocysteine + 4 H(+). Functionally, specifically dimethylates two adjacent adenosines (A1518 and A1519) in the loop of a conserved hairpin near the 3'-end of 16S rRNA in the 30S particle. May play a critical role in biogenesis of 30S subunits. In Dichelobacter nodosus (strain VCS1703A), this protein is Ribosomal RNA small subunit methyltransferase A.